Reading from the N-terminus, the 483-residue chain is Altronate oxidoreductase (483 aa).

Residue 18-29 (IIQFGEGNFLRA) coordinates NAD(+).

The protein belongs to the mannitol dehydrogenase family. UxaB subfamily.

It catalyses the reaction D-altronate + NAD(+) = keto-D-tagaturonate + NADH + H(+). It functions in the pathway carbohydrate metabolism; pentose and glucuronate interconversion. The sequence is that of Altronate oxidoreductase from Escherichia coli O1:K1 / APEC.